The following is a 189-amino-acid chain: Movement protein p22 (189 aa).

The protein belongs to the tombusvirus/aureusvirus movement protein p22 family. In terms of assembly, interacts with host protein HFI22. Phosphorylated.

The protein resides in the host membrane. Functionally, cell-to-cell movement. Displays RNA-binding activity. The polypeptide is Movement protein p22 (Capsicum annuum (Capsicum pepper)).